Here is a 32-residue protein sequence, read N- to C-terminus: U6-ctenitoxin-Pr1a (32 aa).

Cystine bridges form between C3-C17, C10-C21, and C16-C30.

In terms of tissue distribution, expressed by the venom gland.

It is found in the secreted. In Phoneutria reidyi (Brazilian Amazonian armed spider), this protein is U6-ctenitoxin-Pr1a.